The primary structure comprises 878 residues: Calcium-transporting ATPase 1 (878 aa).

A run of 4 helical transmembrane segments spans residues 50–72, 76–95, 243–263, and 281–301; these read LFID…VQLF, FVES…VAVV, LGWV…LRLF, and FAVA…VTIV. Ca(2+)-binding residues include Val-287, Ala-288, Ile-290, and Glu-292. The active-site 4-aspartylphosphate intermediate is the Asp-334. Helical transmembrane passes span 681 to 701, 704 to 724, 753 to 773, 779 to 799, 816 to 836, and 845 to 865; these read LFSG…VGWV, FTAL…AIAL, VILI…YVGQ, MGVA…TFAA, YVLM…LPFL, and AFGW…VICM. Residues Asn-713 and Asp-717 each coordinate Ca(2+).

It belongs to the cation transport ATPase (P-type) (TC 3.A.3) family. Type IIA subfamily.

It is found in the cell membrane. It carries out the reaction Ca(2+)(in) + ATP + H2O = Ca(2+)(out) + ADP + phosphate + H(+). Its activity is regulated as follows. Inhibited by very high concentrations of cyclopiazonic acid (CPA). Catalyzes the hydrolysis of ATP coupled with the transport of calcium. This is Calcium-transporting ATPase 1 (yoaB) from Lactococcus lactis subsp. lactis (strain IL1403) (Streptococcus lactis).